A 469-amino-acid chain; its full sequence is MKVCQKYTAVLLVWLSAVVSMRAGAVDLPDFTGLVERTSPAVVNISTVRKVGDDSAQYYFGGPEQDQIPEFFRHFFGDPYRRRGPQEAQSTGSGFIVSKDGYILTNNHVVAGADEIFVRLMDRRELTAKLIGSDEKSDLAVLKVEADDLPVLNLGKSSELKVGEWVVAIGSPFGFEYTVTAGIVSAKGRSLPNENYVPFIQTDVAINPGNSGGPLFNLEGEVVGINSQIYTRSGGFMGVSFAIPIDVALDVMNQLKDTGAVKRGWLGVLIQEVNKDLAESFNLNKPRGALVAQVMKGSPADKAGLQPGDVIVSYNGNEIGLSSELPHLVGRTSPGQKASMKVVRRGDEMDVAVEIGQLPADDNGVASVPAGQTAPQNNALNLQVRDLTDEEKESMQVAGGVMVAQVFPGPAATAGIQPNDVISSINNKDVETVAQFHEVVEKLPVGKSLPVLIIRQGNPAFIVLKLNNK.

Positions 1–25 (MKVCQKYTAVLLVWLSAVVSMRAGA) are cleaved as a signal peptide. Catalysis depends on charge relay system residues His-108, Asp-138, and Ser-211. Substrate-binding positions include 209–211 (GNS) and 266–270 (LGVLI). PDZ domains are found at residues 255 to 346 (LKDT…VRRG) and 352 to 457 (AVEI…IRQG).

It belongs to the peptidase S1C family.

It localises to the periplasm. The enzyme catalyses Acts on substrates that are at least partially unfolded. The cleavage site P1 residue is normally between a pair of hydrophobic residues, such as Val-|-Val.. Might be efficient in the degradation of transiently denatured and unfolded proteins which accumulate in the periplasm following stress conditions. In Hahella chejuensis (strain KCTC 2396), this protein is Probable periplasmic serine endoprotease DegP-like (mucD).